The sequence spans 726 residues: Ribonuclease R (726 aa).

Residues 262–590 form the RNB domain; sequence RIDLRHLPFF…LVHRVIKNLL (329 aa). Residues 642–723 enclose the S1 motif domain; it reads GDVLTGVISN…NERKIELSLY (82 aa).

The protein belongs to the RNR ribonuclease family. RNase R subfamily. As to quaternary structure, monomer.

It is found in the cytoplasm. The catalysed reaction is Exonucleolytic cleavage in the 3'- to 5'-direction to yield nucleoside 5'-phosphates.. Functionally, 3'-5' exoribonuclease that releases 5'-nucleoside monophosphates and is involved in maturation of structured RNAs. The protein is Ribonuclease R of Buchnera aphidicola subsp. Schizaphis graminum (strain Sg).